We begin with the raw amino-acid sequence, 547 residues long: Probable protein kinase UbiB (547 aa).

The Protein kinase domain maps to 121 to 501 (EFSPDPMASA…QLRSERRWRR (381 aa)). ATP contacts are provided by residues 127–135 (MASASVAQV) and K149. D284 (proton acceptor) is an active-site residue. A run of 2 helical transmembrane segments spans residues 502 to 522 (GFIALVLAGAALVGSQPHAGQ) and 523 to 543 (WLADLPVWSWALLAGAAGVML).

This sequence belongs to the ABC1 family. UbiB subfamily.

The protein localises to the cell inner membrane. Its pathway is cofactor biosynthesis; ubiquinone biosynthesis [regulation]. Functionally, is probably a protein kinase regulator of UbiI activity which is involved in aerobic coenzyme Q (ubiquinone) biosynthesis. In Marinobacter nauticus (strain ATCC 700491 / DSM 11845 / VT8) (Marinobacter aquaeolei), this protein is Probable protein kinase UbiB.